The following is a 153-amino-acid chain: Aspartate carbamoyltransferase regulatory chain (153 aa).

The Zn(2+) site is built by Cys110, Cys115, Cys138, and Cys141.

It belongs to the PyrI family. As to quaternary structure, contains catalytic and regulatory chains. Zn(2+) serves as cofactor.

In terms of biological role, involved in allosteric regulation of aspartate carbamoyltransferase. In Bacteroides thetaiotaomicron (strain ATCC 29148 / DSM 2079 / JCM 5827 / CCUG 10774 / NCTC 10582 / VPI-5482 / E50), this protein is Aspartate carbamoyltransferase regulatory chain.